The chain runs to 190 residues: Protein GrpE (190 aa).

Residues 1–33 (MSEQEKDQNNAEPQVETVEEQQAAAAAEAVEPT) form a disordered region. The span at 11 to 32 (AEPQVETVEEQQAAAAAEAVEP) shows a compositional bias: low complexity.

Belongs to the GrpE family. As to quaternary structure, homodimer.

The protein localises to the cytoplasm. In terms of biological role, participates actively in the response to hyperosmotic and heat shock by preventing the aggregation of stress-denatured proteins, in association with DnaK and GrpE. It is the nucleotide exchange factor for DnaK and may function as a thermosensor. Unfolded proteins bind initially to DnaJ; upon interaction with the DnaJ-bound protein, DnaK hydrolyzes its bound ATP, resulting in the formation of a stable complex. GrpE releases ADP from DnaK; ATP binding to DnaK triggers the release of the substrate protein, thus completing the reaction cycle. Several rounds of ATP-dependent interactions between DnaJ, DnaK and GrpE are required for fully efficient folding. This is Protein GrpE from Alcanivorax borkumensis (strain ATCC 700651 / DSM 11573 / NCIMB 13689 / SK2).